Reading from the N-terminus, the 586-residue chain is Protein NRT1/ PTR FAMILY 5.3 (586 aa).

A run of 11 helical transmembrane segments spans residues 77-97 (WVGTSWLTPILGAYVADAHFG), 100-120 (ITFVISSAIYLLGMALLTLSV), 141-161 (ASVIQLAVFFGALYTLAIGTG), 189-209 (FFNWWMFSIFFGTFFATTVLV), 217-237 (WAIGYGLSTLGLAFSIFIFLL), 334-354 (PVLFVTFVPSMMLAQIMTLFI), 370-390 (IPPASLLGFTTFSMLVSIVIY), 408-428 (ITLLQRMGIGMILHILIMIIA), 449-469 (AVPIPLSIFTLLPQYVLMGLA), 492-512 (LGTSYTSTSMAVGYFMSSILL), and 538-558 (NYYMFFAVLNLLNFILFLVVI).

This sequence belongs to the major facilitator superfamily. Proton-dependent oligopeptide transporter (POT/PTR) (TC 2.A.17) family. As to expression, expressed in roots and siliques.

Its subcellular location is the membrane. Peptide transporter. This is Protein NRT1/ PTR FAMILY 5.3 (NPF5.3) from Arabidopsis thaliana (Mouse-ear cress).